The chain runs to 266 residues: Regulatory protein RecX (266 aa).

Belongs to the RecX family.

It localises to the cytoplasm. Its function is as follows. Modulates RecA activity. This chain is Regulatory protein RecX, found in Levilactobacillus brevis (strain ATCC 367 / BCRC 12310 / CIP 105137 / JCM 1170 / LMG 11437 / NCIMB 947 / NCTC 947) (Lactobacillus brevis).